The primary structure comprises 433 residues: Glutamyl-tRNA reductase (433 aa).

Substrate is bound by residues 49 to 52 (TCNR), serine 114, 119 to 121 (EPQ), and glutamine 125. Cysteine 50 serves as the catalytic Nucleophile. 201–206 (GAGETI) serves as a coordination point for NADP(+).

The protein belongs to the glutamyl-tRNA reductase family. Homodimer.

It carries out the reaction (S)-4-amino-5-oxopentanoate + tRNA(Glu) + NADP(+) = L-glutamyl-tRNA(Glu) + NADPH + H(+). It functions in the pathway porphyrin-containing compound metabolism; protoporphyrin-IX biosynthesis; 5-aminolevulinate from L-glutamyl-tRNA(Glu): step 1/2. Its function is as follows. Catalyzes the NADPH-dependent reduction of glutamyl-tRNA(Glu) to glutamate 1-semialdehyde (GSA). In Histophilus somni (strain 2336) (Haemophilus somnus), this protein is Glutamyl-tRNA reductase.